The following is a 214-amino-acid chain: Octanoyltransferase (214 aa).

Residues 32 to 207 (EDTLDEIWLV…NLLALLNHPP (176 aa)) enclose the BPL/LPL catalytic domain. Substrate is bound by residues 71–78 (RGGQVTYH), 138–140 (SLG), and 151–153 (GLA). The Acyl-thioester intermediate role is filled by Cys169.

Belongs to the LipB family.

The protein localises to the cytoplasm. It carries out the reaction octanoyl-[ACP] + L-lysyl-[protein] = N(6)-octanoyl-L-lysyl-[protein] + holo-[ACP] + H(+). The protein operates within protein modification; protein lipoylation via endogenous pathway; protein N(6)-(lipoyl)lysine from octanoyl-[acyl-carrier-protein]: step 1/2. Functionally, catalyzes the transfer of endogenously produced octanoic acid from octanoyl-acyl-carrier-protein onto the lipoyl domains of lipoate-dependent enzymes. Lipoyl-ACP can also act as a substrate although octanoyl-ACP is likely to be the physiological substrate. The protein is Octanoyltransferase of Klebsiella pneumoniae (strain 342).